An 869-amino-acid chain; its full sequence is Valine--tRNA ligase (869 aa).

The short motif at 47–57 (PYPTGNFHIGN) is the 'HIGH' region element. The short motif at 521–525 (KMSKS) is the 'KMSKS' region element. Residue Lys-524 participates in ATP binding.

This sequence belongs to the class-I aminoacyl-tRNA synthetase family. ValS type 2 subfamily.

The protein localises to the cytoplasm. The catalysed reaction is tRNA(Val) + L-valine + ATP = L-valyl-tRNA(Val) + AMP + diphosphate. Its function is as follows. Catalyzes the attachment of valine to tRNA(Val). As ValRS can inadvertently accommodate and process structurally similar amino acids such as threonine, to avoid such errors, it has a 'posttransfer' editing activity that hydrolyzes mischarged Thr-tRNA(Val) in a tRNA-dependent manner. The chain is Valine--tRNA ligase from Methanosarcina mazei (strain ATCC BAA-159 / DSM 3647 / Goe1 / Go1 / JCM 11833 / OCM 88) (Methanosarcina frisia).